The sequence spans 566 residues: DNA ligase B (566 aa).

The active-site N6-AMP-lysine intermediate is K125.

The protein belongs to the NAD-dependent DNA ligase family. LigB subfamily.

It catalyses the reaction NAD(+) + (deoxyribonucleotide)n-3'-hydroxyl + 5'-phospho-(deoxyribonucleotide)m = (deoxyribonucleotide)n+m + AMP + beta-nicotinamide D-nucleotide.. Its function is as follows. Catalyzes the formation of phosphodiester linkages between 5'-phosphoryl and 3'-hydroxyl groups in double-stranded DNA using NAD as a coenzyme and as the energy source for the reaction. The protein is DNA ligase B of Pseudomonas putida (strain ATCC 700007 / DSM 6899 / JCM 31910 / BCRC 17059 / LMG 24140 / F1).